The following is a 31-amino-acid chain: Cytochrome b6-f complex subunit 6 (31 aa).

A helical membrane pass occupies residues 4-26 (LTSYFGFLLAASTITPALFIGLN).

The protein belongs to the PetL family. In terms of assembly, the 4 large subunits of the cytochrome b6-f complex are cytochrome b6, subunit IV (17 kDa polypeptide, PetD), cytochrome f and the Rieske protein, while the 4 small subunits are PetG, PetL, PetM and PetN. The complex functions as a dimer.

The protein resides in the plastid. It localises to the chloroplast thylakoid membrane. Component of the cytochrome b6-f complex, which mediates electron transfer between photosystem II (PSII) and photosystem I (PSI), cyclic electron flow around PSI, and state transitions. PetL is important for photoautotrophic growth as well as for electron transfer efficiency and stability of the cytochrome b6-f complex. The chain is Cytochrome b6-f complex subunit 6 from Phalaenopsis aphrodite subsp. formosana (Moth orchid).